Here is a 375-residue protein sequence, read N- to C-terminus: Probable dipeptidase PepE (375 aa).

2 consecutive transmembrane segments (helical) span residues leucine 15–glycine 35 and leucine 55–leucine 75. Mn(2+) is bound by residues aspartate 230, aspartate 242, histidine 306, glutamate 335, and glutamate 349.

Belongs to the peptidase M24B family. Mn(2+) is required as a cofactor.

The protein localises to the cell membrane. This chain is Probable dipeptidase PepE (pepE), found in Mycobacterium bovis (strain ATCC BAA-935 / AF2122/97).